The following is a 455-amino-acid chain: Bifunctional protein GlmU (455 aa).

Residues 1-225 (MEVVILAAGQ…IWETLGVNSK (225 aa)) form a pyrophosphorylase region. Residues 6–9 (LAAG), lysine 20, glutamine 71, 76–77 (GT), 98–100 (YGD), glycine 135, glutamate 150, asparagine 165, and asparagine 223 contribute to the UDP-N-acetyl-alpha-D-glucosamine site. Position 100 (aspartate 100) interacts with Mg(2+). Position 223 (asparagine 223) interacts with Mg(2+). The interval 226–246 (AQLAELERLHQRNIATRLMED) is linker. Residues 247-455 (GVTLFDPSRI…KRPVKKKAGE (209 aa)) form an N-acetyltransferase region. The UDP-N-acetyl-alpha-D-glucosamine site is built by arginine 329 and lysine 347. Histidine 359 serves as the catalytic Proton acceptor. Residues tyrosine 362 and asparagine 373 each coordinate UDP-N-acetyl-alpha-D-glucosamine. Acetyl-CoA contacts are provided by residues alanine 376, 382–383 (NY), serine 401, alanine 419, and arginine 436.

In the N-terminal section; belongs to the N-acetylglucosamine-1-phosphate uridyltransferase family. This sequence in the C-terminal section; belongs to the transferase hexapeptide repeat family. Homotrimer. It depends on Mg(2+) as a cofactor.

It localises to the cytoplasm. The enzyme catalyses alpha-D-glucosamine 1-phosphate + acetyl-CoA = N-acetyl-alpha-D-glucosamine 1-phosphate + CoA + H(+). The catalysed reaction is N-acetyl-alpha-D-glucosamine 1-phosphate + UTP + H(+) = UDP-N-acetyl-alpha-D-glucosamine + diphosphate. Its pathway is nucleotide-sugar biosynthesis; UDP-N-acetyl-alpha-D-glucosamine biosynthesis; N-acetyl-alpha-D-glucosamine 1-phosphate from alpha-D-glucosamine 6-phosphate (route II): step 2/2. It functions in the pathway nucleotide-sugar biosynthesis; UDP-N-acetyl-alpha-D-glucosamine biosynthesis; UDP-N-acetyl-alpha-D-glucosamine from N-acetyl-alpha-D-glucosamine 1-phosphate: step 1/1. The protein operates within bacterial outer membrane biogenesis; LPS lipid A biosynthesis. In terms of biological role, catalyzes the last two sequential reactions in the de novo biosynthetic pathway for UDP-N-acetylglucosamine (UDP-GlcNAc). The C-terminal domain catalyzes the transfer of acetyl group from acetyl coenzyme A to glucosamine-1-phosphate (GlcN-1-P) to produce N-acetylglucosamine-1-phosphate (GlcNAc-1-P), which is converted into UDP-GlcNAc by the transfer of uridine 5-monophosphate (from uridine 5-triphosphate), a reaction catalyzed by the N-terminal domain. This Aromatoleum aromaticum (strain DSM 19018 / LMG 30748 / EbN1) (Azoarcus sp. (strain EbN1)) protein is Bifunctional protein GlmU.